Here is a 391-residue protein sequence, read N- to C-terminus: Mannonate dehydratase (391 aa).

Residues 334 to 359 (ERRRERDGGPRLPLRPDHGHHLLDDL) form a disordered region.

This sequence belongs to the mannonate dehydratase family. Fe(2+) is required as a cofactor. Mn(2+) serves as cofactor.

It carries out the reaction D-mannonate = 2-dehydro-3-deoxy-D-gluconate + H2O. Its pathway is carbohydrate metabolism; pentose and glucuronate interconversion. Its function is as follows. Catalyzes the dehydration of D-mannonate. The sequence is that of Mannonate dehydratase from Chromohalobacter salexigens (strain ATCC BAA-138 / DSM 3043 / CIP 106854 / NCIMB 13768 / 1H11).